We begin with the raw amino-acid sequence, 726 residues long: Cyclin-T1 (726 aa).

Residue serine 117 is modified to Phosphoserine. The Nuclear localization signal, and interaction with Tat-TAR RNA motif lies at 253-270 (KRIWNWRACEAAKKTKAD). At serine 340 the chain carries Phosphoserine. Lysine 342 is covalently cross-linked (Glycyl lysine isopeptide (Lys-Gly) (interchain with G-Cter in SUMO2)). Residues 360–385 (VDHSLPQDGSNAFISQKQNSKSVPSA) form a disordered region. Polar residues predominate over residues 366–382 (QDGSNAFISQKQNSKSV). The stretch at 384 to 425 (SAKVSLKEYRAKHAEELAAQKRQLENMEANVKSQYAYAAQNL) forms a coiled coil. Serine 388 carries the post-translational modification Phosphoserine. Lysine 390 carries the N6-acetyllysine modification. Lysine 415 participates in a covalent cross-link: Glycyl lysine isopeptide (Lys-Gly) (interchain with G-Cter in SUMO2). An ADP-ribosylserine mark is found at serine 416, serine 474, and serine 475. Residues 480–550 (IKMRIKVHAA…RPGDPKHSSQ (71 aa)) are histidine-rich domain (HRD). Lysine 481 participates in a covalent cross-link: Glycyl lysine isopeptide (Lys-Gly) (interchain with G-Cter in SUMO2). Lysine 485 is subject to N6-(ADP-ribosyl)lysine. An ADP-ribosylhistidine modification is found at histidine 487. Basic and acidic residues predominate over residues 487–506 (HAAADKHNSVEDSVTKSREH). Disordered regions lie at residues 487-650 (HAAA…NGHN) and 688-726 (SDYL…PLPK). 2 positions are modified to phosphoserine: serine 495 and serine 499. Positions 507-530 (KEKHKTHPSNHHHHHNHHSHKHSH) are enriched in basic residues. The required for interaction with ZMYND8 stretch occupies residues 527–570 (KHSHSQLPVGTGNKRPGDPKHSSQTSNLAHKTYSLSSSFSSSSS). Position 530 is an ADP-ribosylhistidine (histidine 530). Residues serine 531, serine 549, and serine 552 each carry the ADP-ribosylserine modification. Histidine 556 is subject to ADP-ribosylhistidine. The segment covering 560–570 (SLSSSFSSSSS) has biased composition (low complexity). ADP-ribosylserine is present on serine 563. Residues serine 564 and serine 577 each carry the phosphoserine modification. Residues 594 to 609 (STKSSSLNFSFPSLPT) are compositionally biased toward low complexity. Polar residues predominate over residues 615–630 (GHSSDTSGLSFSQPSC). Serine 637 carries the post-translational modification ADP-ribosylserine. Over residues 710–726 (PPPLPSEPPPPLPPLPK) the composition is skewed to pro residues.

It belongs to the cyclin family. Cyclin C subfamily. Cyclin-T1 is the predominant cyclin that associates with CDK9 to form a heterodimer called P-TEFb. P-TEFb forms a complex with AFF4/AF5Q31. Component of a complex which is at least composed of HTATSF1/Tat-SF1, P-TEFb complex, RNA pol II, SUPT5H, and NCL/nucleolin. Component of the 7SK snRNP complex at least composed of P-TEFb (composed of CDK9 and CCNT1/cyclin-T1), HEXIM1, HEXIM2, BCDIN3, SART3 proteins and 7SK and U6 snRNAs. Interacts (via central region) with ZMYND8 (via N-terminus); the interaction is direct and the association appears to occur between homodimeric ZMYND8 and the activated form of the P-TEFb complex. Interacts with BRD4, targets chromatin binding. Interacts with JMJD6. Interacts with MDFIC. Interacts with HSF1. Interacts with HTATSF1. Interacts with TBX21. In terms of assembly, (Microbial infection) Interacts with the transactivation region of HIV-1, HIV-2 and SIV Tat. As to quaternary structure, (Microbial infection) Interacts with human herpes virus 1 (HHV-1) transcriptional regulator ICP22. In terms of processing, ADP-ribosylation on serine residues by PARP1 in response to DNA damage disrupts the phase separation activity of CCNT1, thereby preventing activation of CDK9. In terms of tissue distribution, ubiquitously expressed.

Its subcellular location is the nucleus. Regulatory subunit of the cyclin-dependent kinase pair (CDK9/cyclin-T1) complex, also called positive transcription elongation factor B (P-TEFb), which facilitates the transition from abortive to productive elongation by phosphorylating the CTD (C-terminal domain) of the large subunit of RNA polymerase II (RNA Pol II). Required to activate the protein kinase activity of CDK9: acts by mediating formation of liquid-liquid phase separation (LLPS) that enhances binding of P-TEFb to the CTD of RNA Pol II. Functionally, (Microbial infection) In case of HIV or SIV infections, binds to the transactivation domain of the viral nuclear transcriptional activator, Tat, thereby increasing Tat's affinity for the transactivating response RNA element (TAR RNA). Serves as an essential cofactor for Tat, by promoting RNA Pol II activation, allowing transcription of viral genes. This chain is Cyclin-T1 (CCNT1), found in Homo sapiens (Human).